The primary structure comprises 350 residues: Selenide, water dikinase (350 aa).

The active site involves Cys17. ATP is bound by residues Lys20 and 48 to 50 (LFD). Position 51 (Asp51) interacts with Mg(2+). ATP contacts are provided by residues Asp68, Asp91, and 139–141 (GHS). Residue Asp91 coordinates Mg(2+). Asp229 is a Mg(2+) binding site.

It belongs to the selenophosphate synthase 1 family. Class I subfamily. Homodimer. Requires Mg(2+) as cofactor.

The enzyme catalyses hydrogenselenide + ATP + H2O = selenophosphate + AMP + phosphate + 2 H(+). Synthesizes selenophosphate from selenide and ATP. This chain is Selenide, water dikinase, found in Bdellovibrio bacteriovorus (strain ATCC 15356 / DSM 50701 / NCIMB 9529 / HD100).